The primary structure comprises 274 residues: Kit ligand (274 aa).

An N-terminal signal peptide occupies residues 1–25 (MKKTQTWIITCIYLQLLLFNPLVKT). Over 26 to 215 (KGICGKRVTD…SNSIGDSNLQ (190 aa)) the chain is Extracellular. 2 cysteine pairs are disulfide-bonded: Cys29/Cys114 and Cys68/Cys164. N-linked (GlcNAc...) asparagine glycans are attached at residues Asn90, Asn97, Asn145, and Asn196. A helical transmembrane segment spans residues 216 to 238 (WAAMALPAFFSLVIGFAFGALYW). Residues 239 to 274 (KKKQPNLTRTVENIQINEEDNEISMLQEKEREFQEV) lie on the Cytoplasmic side of the membrane.

This sequence belongs to the SCF family. Homodimer, non-covalently linked. In terms of processing, a soluble form is produced by proteolytic processing of the extracellular domain.

The protein resides in the cytoplasm. The protein localises to the cytoskeleton. It localises to the cell membrane. Its subcellular location is the cell projection. It is found in the lamellipodium. The protein resides in the filopodium. The protein localises to the secreted. Stimulates the proliferation of mast cells. Able to augment the proliferation of both myeloid and lymphoid hematopoietic progenitors in bone marrow culture. Also mediates cell-cell adhesion. Acts synergistically with other cytokines, probably interleukins. The chain is Kit ligand (KITLG) from Canis lupus familiaris (Dog).